A 453-amino-acid chain; its full sequence is Gastrin/cholecystokinin type B receptor (453 aa).

At Met1–Arg57 the chain is on the extracellular side. N-linked (GlcNAc...) asparagine glycans are attached at residues Asn7, Asn30, and Asn36. A helical transmembrane segment spans residues Ile58–Leu79. At Gly80–Thr87 the chain is on the cytoplasmic side. The chain crosses the membrane as a helical span at residues Val88–Pro109. The Extracellular segment spans residues Phe110–Ser131. A disulfide bridge links Cys127 with Cys205. A helical transmembrane segment spans residues Tyr132–Leu150. Topologically, residues Glu151–His170 are cytoplasmic. The chain crosses the membrane as a helical span at residues Ala171–Tyr189. Residues Pro190–Ser219 lie on the Extracellular side of the membrane. Residues Val220–Ser242 traverse the membrane as a helical segment. Residues Arg243–Arg339 lie on the Cytoplasmic side of the membrane. Residues Ser257 to Pro276 form a disordered region. A helical membrane pass occupies residues Met340–Trp361. The Extracellular segment spans residues Arg362–Ser379. A helical membrane pass occupies residues Phe380–His400. Topologically, residues Arg401–Gly453 are cytoplasmic. The S-palmitoyl cysteine moiety is linked to residue Cys414.

This sequence belongs to the G-protein coupled receptor 1 family.

The protein resides in the cell membrane. Receptor for gastrin and cholecystokinin. The CCK-B receptors occur throughout the central nervous system where they modulate anxiety, analgesia, arousal, and neuroleptic activity. This receptor mediates its action by association with G proteins that activate a phosphatidylinositol-calcium second messenger system. The protein is Gastrin/cholecystokinin type B receptor (Cckbr) of Mus musculus (Mouse).